The primary structure comprises 255 residues: Pimeloyl-[acyl-carrier protein] methyl ester esterase (255 aa).

The AB hydrolase-1 domain occupies leucine 16 to glutamate 241. Residues tryptophan 22, serine 82 to leucine 83, and phenylalanine 143 to glutamine 147 contribute to the substrate site. Serine 82 acts as the Nucleophile in catalysis. Residues aspartate 207 and histidine 235 contribute to the active site. Position 235 (histidine 235) interacts with substrate.

The protein belongs to the AB hydrolase superfamily. Carboxylesterase BioH family. In terms of assembly, monomer.

It is found in the cytoplasm. The catalysed reaction is 6-carboxyhexanoyl-[ACP] methyl ester + H2O = 6-carboxyhexanoyl-[ACP] + methanol + H(+). It participates in cofactor biosynthesis; biotin biosynthesis. The physiological role of BioH is to remove the methyl group introduced by BioC when the pimeloyl moiety is complete. It allows to synthesize pimeloyl-ACP via the fatty acid synthetic pathway through the hydrolysis of the ester bonds of pimeloyl-ACP esters. The polypeptide is Pimeloyl-[acyl-carrier protein] methyl ester esterase (Vibrio cholerae serotype O1 (strain ATCC 39315 / El Tor Inaba N16961)).